Consider the following 170-residue polypeptide: Archaemetzincin (170 aa).

A Zn(2+)-binding site is contributed by His110. Glu111 functions as the Proton acceptor in the catalytic mechanism. Residues His114, His120, Cys121, Cys125, Cys144, and Cys147 each coordinate Zn(2+).

Belongs to the peptidase M54 family. As to quaternary structure, monomer. Zn(2+) is required as a cofactor.

Its function is as follows. Probable zinc metalloprotease whose natural substrate is unknown. In Nanoarchaeum equitans (strain Kin4-M), this protein is Archaemetzincin.